The primary structure comprises 90 residues: N(2)-fixation sustaining protein CowN (90 aa).

Belongs to the CowN family.

Is required to sustain N(2)-dependent growth in the presence of low levels of carbon monoxide (CO). Probably acts by protecting the N(2) fixation ability of the nitrogenase complex, which is inactivated in the presence of CO. This chain is N(2)-fixation sustaining protein CowN, found in Methylocella silvestris (strain DSM 15510 / CIP 108128 / LMG 27833 / NCIMB 13906 / BL2).